We begin with the raw amino-acid sequence, 418 residues long: Serine--tRNA ligase (418 aa).

Position 231–233 (threonine 231–glutamate 233) interacts with L-serine. Arginine 262–glutamate 264 is a binding site for ATP. Glutamate 285 is an L-serine binding site. Residue glutamate 349–serine 352 participates in ATP binding. Serine 385 contributes to the L-serine binding site.

Belongs to the class-II aminoacyl-tRNA synthetase family. Type-1 seryl-tRNA synthetase subfamily. In terms of assembly, homodimer. The tRNA molecule binds across the dimer.

Its subcellular location is the cytoplasm. The catalysed reaction is tRNA(Ser) + L-serine + ATP = L-seryl-tRNA(Ser) + AMP + diphosphate + H(+). It carries out the reaction tRNA(Sec) + L-serine + ATP = L-seryl-tRNA(Sec) + AMP + diphosphate + H(+). The protein operates within aminoacyl-tRNA biosynthesis; selenocysteinyl-tRNA(Sec) biosynthesis; L-seryl-tRNA(Sec) from L-serine and tRNA(Sec): step 1/1. Catalyzes the attachment of serine to tRNA(Ser). Is also able to aminoacylate tRNA(Sec) with serine, to form the misacylated tRNA L-seryl-tRNA(Sec), which will be further converted into selenocysteinyl-tRNA(Sec). The chain is Serine--tRNA ligase from Ureaplasma urealyticum serovar 10 (strain ATCC 33699 / Western).